Reading from the N-terminus, the 161-residue chain is MPTDLHPDLAALAPLLGTWTGRGSGKYPTIQPFDYLEEVTFSHVGKPFLAYAQKTRAAADGKPLHAETGYLRVPQPGRLELVLAHPSGITEIEVGSYAVTGGLIEMRMSTTSIGLTPSAKEVTALARWFRIDGDELSYSVQMGAVGQPLQDHLAAVLHRQR.

The short motif at 17–23 (GTWTGRG) is the GXWXGXG element. His-152 is a heme b binding site.

It belongs to the nitrobindin family. As to quaternary structure, homodimer. Requires heme b as cofactor.

The enzyme catalyses peroxynitrite = nitrate. Its pathway is nitrogen metabolism. Functionally, heme-binding protein able to scavenge peroxynitrite and to protect free L-tyrosine against peroxynitrite-mediated nitration, by acting as a peroxynitrite isomerase that converts peroxynitrite to nitrate. Therefore, this protein likely plays a role in peroxynitrite sensing and in the detoxification of reactive nitrogen and oxygen species (RNS and ROS, respectively). Is able to bind nitric oxide (NO) in vitro, but may act as a sensor of peroxynitrite levels in vivo. This chain is Peroxynitrite isomerase 1, found in Mycolicibacterium paratuberculosis (strain ATCC BAA-968 / K-10) (Mycobacterium paratuberculosis).